The chain runs to 618 residues: 1-aminocyclopropane-1-carboxylate synthase-like protein 1 (618 aa).

Positions Gln-11–Thr-26 are enriched in low complexity. The interval Gln-11 to Pro-54 is disordered. Over residues Met-27–Ala-45 the composition is skewed to polar residues. Position 122 (Glu-122) interacts with substrate. An N6-(pyridoxal phosphate)lysine modification is found at Lys-340.

This sequence belongs to the class-I pyridoxal-phosphate-dependent aminotransferase family.

This Takifugu rubripes (Japanese pufferfish) protein is 1-aminocyclopropane-1-carboxylate synthase-like protein 1 (accs).